The sequence spans 417 residues: NADH-quinone oxidoreductase subunit D (417 aa).

This sequence belongs to the complex I 49 kDa subunit family. As to quaternary structure, NDH-1 is composed of 14 different subunits. Subunits NuoB, C, D, E, F, and G constitute the peripheral sector of the complex.

The protein resides in the cell inner membrane. It catalyses the reaction a quinone + NADH + 5 H(+)(in) = a quinol + NAD(+) + 4 H(+)(out). NDH-1 shuttles electrons from NADH, via FMN and iron-sulfur (Fe-S) centers, to quinones in the respiratory chain. The immediate electron acceptor for the enzyme in this species is believed to be ubiquinone. Couples the redox reaction to proton translocation (for every two electrons transferred, four hydrogen ions are translocated across the cytoplasmic membrane), and thus conserves the redox energy in a proton gradient. The sequence is that of NADH-quinone oxidoreductase subunit D from Herminiimonas arsenicoxydans.